A 541-amino-acid chain; its full sequence is Chaperonin GroEL 5 (541 aa).

ATP-binding positions include 30 to 33 (TLGP), G415, and D496.

This sequence belongs to the chaperonin (HSP60) family. As to quaternary structure, forms a cylinder of 14 subunits composed of two heptameric rings stacked back-to-back. Interacts with the co-chaperonin GroES.

It is found in the cytoplasm. The catalysed reaction is ATP + H2O + a folded polypeptide = ADP + phosphate + an unfolded polypeptide.. Together with its co-chaperonin GroES, plays an essential role in assisting protein folding. The GroEL-GroES system forms a nano-cage that allows encapsulation of the non-native substrate proteins and provides a physical environment optimized to promote and accelerate protein folding. The protein is Chaperonin GroEL 5 of Bradyrhizobium diazoefficiens (strain JCM 10833 / BCRC 13528 / IAM 13628 / NBRC 14792 / USDA 110).